The chain runs to 368 residues: MEDDRVFSSVHSTVFKESESLEGKCDKIEGYDFNQGVDYPKLMRSMLTTGFQASNLGEAIDVVNQMLDWRLADETTVAEDCSEEEKNPSFRESVKCKIFLGFTSNLVSSGVRDTIRYLVQHHMVDVIVTTTGGVEEDLIKCLAPTFKGDFSLPGAYLRSKGLNRIGNLLVPNDNYCKFEDWIIPIFDEMLKEQKEENVLWTPSKLLARLGKEINNESSYLYWAYKMNIPVFCPGLTDGSLGDMLYFHSFRTSGLIIDVVQDIRAMNGEAVHANPKKTGMIILGGGLPKHHICNANMMRNGADYAVFINTGQEFDGSDSGARPDEAVSWGKIRGSAKTVKVYCDATIAFPLLVAETFATKRDQTCESKT.

Residues 104–108 (SNLVS), 130–132 (TTG), Glu-136, and Asp-237 each bind NAD(+). Spermidine is bound at residue 135–136 (EE). Asp-242 is a binding site for spermidine. Gly-284 contributes to the NAD(+) binding site. His-289 is a binding site for spermidine. NAD(+) is bound at residue 309 to 310 (TG). Spermidine contacts are provided by residues 315–317 (GSD) and 324–330 (EAVSWGK). Lys-330 serves as the catalytic Nucleophile. NAD(+) is bound at residue 343-344 (DA).

The protein belongs to the deoxyhypusine synthase family. The cofactor is NAD(+).

The enzyme catalyses [eIF5A protein]-L-lysine + spermidine = [eIF5A protein]-deoxyhypusine + propane-1,3-diamine. It functions in the pathway protein modification; eIF5A hypusination. Catalyzes the NAD-dependent oxidative cleavage of spermidine and the subsequent transfer of the butylamine moiety of spermidine to the epsilon-amino group of a specific lysine residue of the eIF-5A precursor protein to form the intermediate deoxyhypusine residue. Also able to produce homospermidine from putrescine. The sequence is that of Deoxyhypusine synthase (DHS) from Arabidopsis thaliana (Mouse-ear cress).